The chain runs to 197 residues: Suppressor of RNA silencing p3 (197 aa).

This sequence belongs to the tenuiviruses p3 protein family. In terms of assembly, homodimer.

It is found in the host cytoplasm. Its function is as follows. Acts as a suppressor of RNA-mediated gene silencing, also known as post-transcriptional gene silencing (PTGS), presumably through the binding of dsRNA. The sequence is that of Suppressor of RNA silencing p3 from Rottboellia (Sorghum).